A 194-amino-acid chain; its full sequence is HTH-type transcriptional regulator BetI (194 aa).

The 61-residue stretch at 8–68 folds into the HTH tetR-type domain; sequence EIRRAQLIDA…ATMRHVLRDL (61 aa). The segment at residues 31-50 is a DNA-binding region (H-T-H motif); sequence TLASVAQRANISTGIVSHYF.

Its pathway is amine and polyamine biosynthesis; betaine biosynthesis via choline pathway [regulation]. Repressor involved in the biosynthesis of the osmoprotectant glycine betaine. It represses transcription of the choline transporter BetT and the genes of BetAB involved in the synthesis of glycine betaine. The sequence is that of HTH-type transcriptional regulator BetI from Burkholderia cenocepacia (strain ATCC BAA-245 / DSM 16553 / LMG 16656 / NCTC 13227 / J2315 / CF5610) (Burkholderia cepacia (strain J2315)).